The sequence spans 88 residues: MLPRSCKDFYETLRTAVLCGQACAKDMGAIVFHGLWQGLAVLIAQPPPPTHRRLESRPTASVAVHDRQLVHMLANMVLAAETRGNHVY.

The N-terminal stretch at 1–24 (MLPRSCKDFYETLRTAVLCGQACA) is a signal peptide.

This sequence to Rhizobium NGR234A y4oL.

This is an uncharacterized protein from Sinorhizobium fredii (strain NBRC 101917 / NGR234).